A 158-amino-acid chain; its full sequence is uncharacterized protein (158 aa).

This sequence belongs to the mimivirus L223/L227/L812 family.

This is an uncharacterized protein from Acanthamoeba polyphaga mimivirus (APMV).